We begin with the raw amino-acid sequence, 208 residues long: Ribosome maturation factor RimM (208 aa).

Positions 98 to 205 constitute a PRC barrel domain; sequence ADEFYVPDLI…IIEITPPDGL (108 aa). The tract at residues 154 to 174 is disordered; the sequence is LPSKSKRSRDTKNQKKNQSPP.

It belongs to the RimM family. As to quaternary structure, binds ribosomal protein uS19.

Its subcellular location is the cytoplasm. In terms of biological role, an accessory protein needed during the final step in the assembly of 30S ribosomal subunit, possibly for assembly of the head region. Essential for efficient processing of 16S rRNA. May be needed both before and after RbfA during the maturation of 16S rRNA. It has affinity for free ribosomal 30S subunits but not for 70S ribosomes. The chain is Ribosome maturation factor RimM from Trichodesmium erythraeum (strain IMS101).